Reading from the N-terminus, the 253-residue chain is 2-dehydro-3-deoxy-D-gluconate 5-dehydrogenase (253 aa).

14 to 38 (VVTGCDTGLGQGMALGLAQAGCDIV) serves as a coordination point for NAD(+). Substrate is bound at residue S145. Catalysis depends on Y158, which acts as the Proton acceptor.

This sequence belongs to the short-chain dehydrogenases/reductases (SDR) family. As to quaternary structure, homotetramer.

It catalyses the reaction 2-dehydro-3-deoxy-D-gluconate + NAD(+) = 3-deoxy-D-glycero-2,5-hexodiulosonate + NADH + H(+). The enzyme catalyses 4-pregnen-20,21-diol-3-one + NAD(+) = 21-hydroxyprogesterone + NADH + H(+). Catalyzes the reversible reduction of 2,5-diketo-3-deoxygluconate (DKII or 4,6-dihydroxy-2,5-dioxohexanoate) into 2-keto-3-deoxygluconate (KDG or 2-dehydro-3-deoxygluconate) with a concomitant oxidation of NADH. To a lesser extent, can also reduce 5-keto-D-gluconate and oxidize D-gluconate and 1,2-propanediol. Together with KduI, seems to play a role in the catabolism of hexuronates under osmotic stress conditions, substituting for the regular hexuronate degrading enzymes UxaABC and UxuAB whose expression is repressed in these conditions. In vitro, also exhibits NADH-dependent 20-ketosteroid reductase activity against eukaryotic steroid hormone 11-deoxycorticosterone (11-DOC), which is converted into the product 4-pregnen-20,21-diol-3-one. In addition to 11-DOC, five other C21 steroid compounds (11-deoxycortisol, cortisol, corticosterone, cortisone, and 21-hydroxypregnenolone) are reduced by KduD, but steroids lacking the hydroxyl group at C21 position, such as pregnenolone, testosterone propionate, cortisone acetate, or progesterone, cannot be used as substrate. The polypeptide is 2-dehydro-3-deoxy-D-gluconate 5-dehydrogenase (Escherichia coli (strain K12)).